Here is a 564-residue protein sequence, read N- to C-terminus: Proline--tRNA ligase 1 (564 aa).

Belongs to the class-II aminoacyl-tRNA synthetase family. ProS type 1 subfamily. As to quaternary structure, homodimer.

The protein resides in the cytoplasm. It carries out the reaction tRNA(Pro) + L-proline + ATP = L-prolyl-tRNA(Pro) + AMP + diphosphate. Functionally, catalyzes the attachment of proline to tRNA(Pro) in a two-step reaction: proline is first activated by ATP to form Pro-AMP and then transferred to the acceptor end of tRNA(Pro). As ProRS can inadvertently accommodate and process non-cognate amino acids such as alanine and cysteine, to avoid such errors it has two additional distinct editing activities against alanine. One activity is designated as 'pretransfer' editing and involves the tRNA(Pro)-independent hydrolysis of activated Ala-AMP. The other activity is designated 'posttransfer' editing and involves deacylation of mischarged Ala-tRNA(Pro). The misacylated Cys-tRNA(Pro) is not edited by ProRS. This chain is Proline--tRNA ligase 1, found in Streptomyces avermitilis (strain ATCC 31267 / DSM 46492 / JCM 5070 / NBRC 14893 / NCIMB 12804 / NRRL 8165 / MA-4680).